Here is a 135-residue protein sequence, read N- to C-terminus: Prostate and breast cancer overexpressed gene 1 protein (135 aa).

As to expression, expressed in colon, prostate, small intestine, testis and spleen, with lower expression in thymus, ovary, and peripheral blood leukocytes. Up-regulated expression in prostate, breast, and bladder cancer, but not in lung and colon cancer.

It is found in the cytoplasm. Its subcellular location is the nucleus. This chain is Prostate and breast cancer overexpressed gene 1 protein (PBOV1), found in Homo sapiens (Human).